Consider the following 296-residue polypeptide: Protoheme IX farnesyltransferase (296 aa).

9 consecutive transmembrane segments (helical) span residues 8 to 28 (VTKPGIIFGNLISVVGGFLLA), 35 to 55 (YPLFLATLVGVSLVVASGCVF), 84 to 104 (VSLVYATALGIAGFALLYIGA), 107 to 127 (LAMWLAVMGFVVYVGVYSLYM), 132 to 152 (VYGTLIGSLSGAAPPVIGYCA), 162 to 182 (LILLAIFSLWQMPHSYAIAIF), 208 to 228 (ITVYIVAFMIATLMLTLGGYA), 229 to 249 (GYKYLIVAAAVSVWWLGMALR), and 263 to 283 (LFVFSIVAITSLSVMMSIDFS).

Belongs to the UbiA prenyltransferase family. Protoheme IX farnesyltransferase subfamily.

The protein localises to the cell inner membrane. The enzyme catalyses heme b + (2E,6E)-farnesyl diphosphate + H2O = Fe(II)-heme o + diphosphate. It functions in the pathway porphyrin-containing compound metabolism; heme O biosynthesis; heme O from protoheme: step 1/1. Converts heme B (protoheme IX) to heme O by substitution of the vinyl group on carbon 2 of heme B porphyrin ring with a hydroxyethyl farnesyl side group. The chain is Protoheme IX farnesyltransferase from Serratia proteamaculans (strain 568).